Consider the following 324-residue polypeptide: Acetyl-coenzyme A carboxylase carboxyl transferase subunit alpha (324 aa).

Residues 41 to 291 enclose the CoA carboxyltransferase C-terminal domain; sequence RLDRLKEKIY…QEYVLQEWLK (251 aa).

Belongs to the AccA family. In terms of assembly, acetyl-CoA carboxylase is a heterohexamer composed of biotin carboxyl carrier protein (AccB), biotin carboxylase (AccC) and two subunits each of ACCase subunit alpha (AccA) and ACCase subunit beta (AccD).

It localises to the cytoplasm. The enzyme catalyses N(6)-carboxybiotinyl-L-lysyl-[protein] + acetyl-CoA = N(6)-biotinyl-L-lysyl-[protein] + malonyl-CoA. It participates in lipid metabolism; malonyl-CoA biosynthesis; malonyl-CoA from acetyl-CoA: step 1/1. Its function is as follows. Component of the acetyl coenzyme A carboxylase (ACC) complex. First, biotin carboxylase catalyzes the carboxylation of biotin on its carrier protein (BCCP) and then the CO(2) group is transferred by the carboxyltransferase to acetyl-CoA to form malonyl-CoA. In Chlamydia muridarum (strain MoPn / Nigg), this protein is Acetyl-coenzyme A carboxylase carboxyl transferase subunit alpha.